The sequence spans 195 residues: Thymidylate kinase (195 aa).

Position 7 to 14 (7 to 14) interacts with ATP; that stretch reads GIDGVGKS.

Belongs to the thymidylate kinase family.

The catalysed reaction is dTMP + ATP = dTDP + ADP. Its function is as follows. Phosphorylation of dTMP to form dTDP in both de novo and salvage pathways of dTTP synthesis. The polypeptide is Thymidylate kinase (Campylobacter hominis (strain ATCC BAA-381 / DSM 21671 / CCUG 45161 / LMG 19568 / NCTC 13146 / CH001A)).